A 323-amino-acid polypeptide reads, in one-letter code: Elongation factor P--(R)-beta-lysine ligase (323 aa).

Position 76–78 (76–78) interacts with substrate; that stretch reads SPE. Residues 100–102 and Asn-109 contribute to the ATP site; that span reads RNE. Tyr-118 serves as a coordination point for substrate. 242 to 243 is an ATP binding site; that stretch reads EL. Glu-249 lines the substrate pocket. Gly-298 provides a ligand contact to ATP.

Belongs to the class-II aminoacyl-tRNA synthetase family. EpmA subfamily. As to quaternary structure, homodimer.

The catalysed reaction is D-beta-lysine + L-lysyl-[protein] + ATP = N(6)-((3R)-3,6-diaminohexanoyl)-L-lysyl-[protein] + AMP + diphosphate + H(+). Its function is as follows. With EpmB is involved in the beta-lysylation step of the post-translational modification of translation elongation factor P (EF-P). Catalyzes the ATP-dependent activation of (R)-beta-lysine produced by EpmB, forming a lysyl-adenylate, from which the beta-lysyl moiety is then transferred to the epsilon-amino group of a conserved specific lysine residue in EF-P. The sequence is that of Elongation factor P--(R)-beta-lysine ligase from Haemophilus influenzae (strain PittGG).